Here is a 95-residue protein sequence, read N- to C-terminus: Co-chaperonin GroES (95 aa).

A compositionally biased stretch (basic and acidic residues) spans 12–22 (VKPSPAEEKTK). Positions 12–38 (VKPSPAEEKTKGGLYIPDSGKEKPQHG) are disordered.

Belongs to the GroES chaperonin family. In terms of assembly, heptamer of 7 subunits arranged in a ring. Interacts with the chaperonin GroEL.

It is found in the cytoplasm. Functionally, together with the chaperonin GroEL, plays an essential role in assisting protein folding. The GroEL-GroES system forms a nano-cage that allows encapsulation of the non-native substrate proteins and provides a physical environment optimized to promote and accelerate protein folding. GroES binds to the apical surface of the GroEL ring, thereby capping the opening of the GroEL channel. This is Co-chaperonin GroES from Chloroherpeton thalassium (strain ATCC 35110 / GB-78).